The chain runs to 436 residues: Immediate-early phosphoprotein 57 (436 aa).

Positions 71–140 (VPKRERSKTP…TPSNQNPLTE (70 aa)) are disordered. A compositionally biased stretch (low complexity) spans 104–119 (QRPAPSARSRRPQPYS). Positions 127-138 (KPQSTPSNQNPL) are enriched in polar residues.

Belongs to the herpesviridae UL69 family.

The protein localises to the host nucleus. The protein resides in the host cytoplasm. In terms of biological role, acts at a post-transcriptional level to regulate viral gene expression. In Alcelaphine herpesvirus 1 (strain C500) (AlHV-1), this protein is Immediate-early phosphoprotein 57 (57).